The sequence spans 220 residues: MGFQIAIDGPAASGKSTIAKLLAEKLGFDHLNTGATYRAVAVYLHEKGLSSSSAEEEIENVLKDLKIDYVNGRVYINGEDYTEKIQSPEAGVLASNFARLEVVRRHLVRIQREICDDKNIVVEGRDIGTVVLPNAHLKIFLTASLEARVERKLKEYQKRGLKVTKEEVERELISRDEQDSKRNVAPLKPAEDAVIIDTTSMSVEEVLDRILKLVRERMNT.

An ATP-binding site is contributed by 9 to 17 (GPAASGKST).

Belongs to the cytidylate kinase family. Type 1 subfamily.

The protein localises to the cytoplasm. It carries out the reaction CMP + ATP = CDP + ADP. The enzyme catalyses dCMP + ATP = dCDP + ADP. In Thermotoga maritima (strain ATCC 43589 / DSM 3109 / JCM 10099 / NBRC 100826 / MSB8), this protein is Cytidylate kinase.